A 187-amino-acid polypeptide reads, in one-letter code: MTAYVRPALSLILLMTVVTGALYPLAVTGIAQVAFPKQANGSLVRDDRGEVRGSALIAQEFKGDGWFQSRPSAGAYATVASSASNLSPSNPALAERVKTDAAAQYQAQQGPVPQALLTTSGSGLDPHLPPEAIAYQLPRVAAARQVSEERLQVLVNDATLRPLIGPPVVNVLALNQALERLAPLAAR.

Residues 11–31 form a helical membrane-spanning segment; sequence LILLMTVVTGALYPLAVTGIA.

This sequence belongs to the KdpC family. As to quaternary structure, the system is composed of three essential subunits: KdpA, KdpB and KdpC.

It is found in the cell inner membrane. Functionally, part of the high-affinity ATP-driven potassium transport (or Kdp) system, which catalyzes the hydrolysis of ATP coupled with the electrogenic transport of potassium into the cytoplasm. This subunit acts as a catalytic chaperone that increases the ATP-binding affinity of the ATP-hydrolyzing subunit KdpB by the formation of a transient KdpB/KdpC/ATP ternary complex. This chain is Potassium-transporting ATPase KdpC subunit, found in Pseudomonas entomophila (strain L48).